A 437-amino-acid polypeptide reads, in one-letter code: MDTPLRGRRAAGRGVRARARPRTRRRHRNDHPLLAGRRYLRDDRVRLQDARKPPARARVPQLRGRDFALRRADRRVEHVPLRGRHPRVRRVPQRDQDGAPRRRHLLRRRVGGHRGRNRHAGDRRAPGVDSRLRQQHQHPRGRHASDRVQDGAHPRRQRLREQPRHAGRPRRRQPPRRGRSRGTHRRHLRQAPRPAVRGPDEDQAREFRGPRHRRERHPPTARDVLRGEPGHGDGHHLEGRRGRPRPQGREAGRGAHPPQVRARIYLAAGEARGLPEPRPLGVRTVHRGGRLRGRVGQAGPRPQVPGDFAPQGEDSERRETPPRPHSRKRRDTGAHHRHWRRRRRRVRHREGALPAAHPDDRRRRRRRAHPDAAAYASVPAHAPAHRGRLRVRGSTAAVPRPLPRQHLRRDGRGRAGPHHRGGMQRQPHAGPAVQGTR.

Basic residues-rich tracts occupy residues 1 to 29, 81 to 91, and 101 to 118; these read MDTPLRGRRAAGRGVRARARPRTRRRHRN, LRGRHPRVRRV, and RRRHLLRRRVGGHRGRNR. 2 disordered regions span residues 1–31 and 77–437; these read MDTPLRGRRAAGRGVRARARPRTRRRHRNDH and EHVP…QGTR. The segment covering 119-132 has biased composition (basic and acidic residues); the sequence is HAGDRRAPGVDSRL. Basic residues predominate over residues 133–142; sequence RQQHQHPRGR. Basic and acidic residues predominate over residues 143–164; that stretch reads HASDRVQDGAHPRRQRLREQPR. Over residues 165 to 190 the composition is skewed to basic residues; the sequence is HAGRPRRRQPPRRGRSRGTHRRHLRQ. Composition is skewed to basic and acidic residues over residues 198–209 and 217–253; these read GPDEDQAREFRG and HPPTARDVLRGEPGHGDGHHLEGRRGRPRPQGREAGR. Basic residues-rich tracts occupy residues 284–293 and 324–348; these read TVHRGGRLRG and PHSRKRRDTGAHHRHWRRRRRRVRH. Over residues 371–382 the composition is skewed to low complexity; sequence DAAAYASVPAHA.

This is an uncharacterized protein from Haloferax lucentense (strain DSM 14919 / JCM 9276 / NCIMB 13854 / Aa 2.2) (Haloferax alicantei).